A 319-amino-acid polypeptide reads, in one-letter code: MSKKTKQELENNKLSKRLRHAVGDAINDFNMIEPGDKIMVCLSGGKDSYALLDILRQLQASAPIDFELVAVNLDQKQPGFPEEVLPTYLESIGVPYKIVEEDTYSTVKRVLDEGKTTCSLCSRLRRGILYRTAKELGCTKIALGHHRDDILATMFLNMFYGGKLKAMPPKLVSDNGEHIVIRPLAYVKEKDLIKYAELKQFPIIPCNLCGSQPNLQRQVIGDMLRDWDKRFPGRIESMFSALQNVVPSHLADTELFDFAGLERGQTLKHGGDLAFDSEKMPERFSDGSEEDESEIKIAPQKAERKVINILANKPKTCGA.

A PP-loop motif motif is present at residues 43–48 (SGGKDS). [4Fe-4S] cluster-binding residues include Cys-118, Cys-121, and Cys-209.

It belongs to the TtcA family. As to quaternary structure, homodimer. Mg(2+) serves as cofactor. Requires [4Fe-4S] cluster as cofactor.

It is found in the cytoplasm. The enzyme catalyses cytidine(32) in tRNA + S-sulfanyl-L-cysteinyl-[cysteine desulfurase] + AH2 + ATP = 2-thiocytidine(32) in tRNA + L-cysteinyl-[cysteine desulfurase] + A + AMP + diphosphate + H(+). The protein operates within tRNA modification. Catalyzes the ATP-dependent 2-thiolation of cytidine in position 32 of tRNA, to form 2-thiocytidine (s(2)C32). The sulfur atoms are provided by the cysteine/cysteine desulfurase (IscS) system. This Neisseria meningitidis serogroup C (strain 053442) protein is tRNA-cytidine(32) 2-sulfurtransferase.